The following is a 369-amino-acid chain: Cobalt-precorrin-5B C(1)-methyltransferase (369 aa).

This sequence belongs to the CbiD family.

The enzyme catalyses Co-precorrin-5B + S-adenosyl-L-methionine = Co-precorrin-6A + S-adenosyl-L-homocysteine. The protein operates within cofactor biosynthesis; adenosylcobalamin biosynthesis; cob(II)yrinate a,c-diamide from sirohydrochlorin (anaerobic route): step 6/10. Functionally, catalyzes the methylation of C-1 in cobalt-precorrin-5B to form cobalt-precorrin-6A. In Methanococcus vannielii (strain ATCC 35089 / DSM 1224 / JCM 13029 / OCM 148 / SB), this protein is Cobalt-precorrin-5B C(1)-methyltransferase.